We begin with the raw amino-acid sequence, 109 residues long: Nucleoid-associated protein SO_2014 (109 aa).

The protein belongs to the YbaB/EbfC family. Homodimer.

Its subcellular location is the cytoplasm. It localises to the nucleoid. Binds to DNA and alters its conformation. May be involved in regulation of gene expression, nucleoid organization and DNA protection. The sequence is that of Nucleoid-associated protein SO_2014 from Shewanella oneidensis (strain ATCC 700550 / JCM 31522 / CIP 106686 / LMG 19005 / NCIMB 14063 / MR-1).